Here is a 125-residue protein sequence, read N- to C-terminus: Small ribosomal subunit protein eS6 (125 aa).

It belongs to the eukaryotic ribosomal protein eS6 family.

This Pyrococcus abyssi (strain GE5 / Orsay) protein is Small ribosomal subunit protein eS6.